Here is an 872-residue protein sequence, read N- to C-terminus: DNA mismatch repair protein MutS (872 aa).

Positions 1 to 17 (MSISKIESVNAEKQSPV) are enriched in polar residues. Residues 1–22 (MSISKIESVNAEKQSPVGTEIG) form a disordered region. ATP is bound at residue 632–639 (GPNMGGKS).

The protein belongs to the DNA mismatch repair MutS family.

In terms of biological role, this protein is involved in the repair of mismatches in DNA. It is possible that it carries out the mismatch recognition step. This protein has a weak ATPase activity. The sequence is that of DNA mismatch repair protein MutS from Azoarcus sp. (strain BH72).